We begin with the raw amino-acid sequence, 337 residues long: uncharacterized protein (337 aa).

Topologically, residues 1–10 (MKLKINIRPN) are cytoplasmic. A helical transmembrane segment spans residues 11-31 (EIIFLICIVVIFSFSYTLTYF). Residues 32-100 (DSPIFKEHYI…LEKLFSFSDN (69 aa)) lie on the Extracellular side of the membrane. Residues 101 to 121 (ILIVLIIVQVIVGFLIFLLSV) traverse the membrane as a helical segment. Residues 122–197 (EKLSKCNYQL…KILIIKKKRD (76 aa)) lie on the Cytoplasmic side of the membrane. The segment covering 148–167 (NNNNEDINNNNNNNNNNNNK) has biased composition (low complexity). Residues 148 to 179 (NNNNEDINNNNNNNNNNNNKNKNDERNNEEIE) form a disordered region. A helical transmembrane segment spans residues 198–218 (ILLAIIIFFLVLLGVLTIIYV). Over 219 to 285 (SFIPLNIRKA…SWSLDSGLFN (67 aa)) the chain is Extracellular. A helical transmembrane segment spans residues 286–306 (VKIVFFSTILIEFLTGCLILL). Over 307–337 (MKFKKDPNIVPLTKPSIASPTQIPHLFCIAK) the chain is Cytoplasmic.

The protein resides in the membrane. This is an uncharacterized protein from Dictyostelium discoideum (Social amoeba).